The chain runs to 213 residues: Phosphoheptose isomerase (213 aa).

The region spanning 50-208 is the SIS domain; it reads MAETFEGGGR…IDLVERMLGY (159 aa). Residue 65–67 participates in substrate binding; that stretch reads NGG. Zn(2+)-binding residues include histidine 74 and glutamate 78. Residues glutamate 78, 109–110, 135–137, serine 140, and glutamine 188 contribute to the substrate site; these read ND and STS. Positions 188 and 196 each coordinate Zn(2+).

The protein belongs to the SIS family. GmhA subfamily. Zn(2+) is required as a cofactor.

It localises to the cytoplasm. The enzyme catalyses 2 D-sedoheptulose 7-phosphate = D-glycero-alpha-D-manno-heptose 7-phosphate + D-glycero-beta-D-manno-heptose 7-phosphate. It participates in carbohydrate biosynthesis; D-glycero-D-manno-heptose 7-phosphate biosynthesis; D-glycero-alpha-D-manno-heptose 7-phosphate and D-glycero-beta-D-manno-heptose 7-phosphate from sedoheptulose 7-phosphate: step 1/1. Functionally, catalyzes the isomerization of sedoheptulose 7-phosphate in D-glycero-D-manno-heptose 7-phosphate. The sequence is that of Phosphoheptose isomerase from Chlorobium phaeovibrioides (strain DSM 265 / 1930) (Prosthecochloris vibrioformis (strain DSM 265)).